Reading from the N-terminus, the 180-residue chain is Large ribosomal subunit protein uL5 (180 aa).

Belongs to the universal ribosomal protein uL5 family. Part of the 50S ribosomal subunit; part of the 5S rRNA/L5/L18/L25 subcomplex. Contacts the 5S rRNA and the P site tRNA. Forms a bridge to the 30S subunit in the 70S ribosome.

This is one of the proteins that bind and probably mediate the attachment of the 5S RNA into the large ribosomal subunit, where it forms part of the central protuberance. In the 70S ribosome it contacts protein S13 of the 30S subunit (bridge B1b), connecting the 2 subunits; this bridge is implicated in subunit movement. Contacts the P site tRNA; the 5S rRNA and some of its associated proteins might help stabilize positioning of ribosome-bound tRNAs. In Streptococcus pyogenes serotype M1, this protein is Large ribosomal subunit protein uL5.